We begin with the raw amino-acid sequence, 389 residues long: Succinate--CoA ligase [ADP-forming] subunit beta (389 aa).

ATP is bound by residues K46, 53 to 55 (GRG), E99, C102, and E107. N199 and D213 together coordinate Mg(2+). Substrate contacts are provided by residues N264 and 321 to 323 (GIV).

Belongs to the succinate/malate CoA ligase beta subunit family. As to quaternary structure, heterotetramer of two alpha and two beta subunits. Mg(2+) serves as cofactor.

The enzyme catalyses succinate + ATP + CoA = succinyl-CoA + ADP + phosphate. The catalysed reaction is GTP + succinate + CoA = succinyl-CoA + GDP + phosphate. The protein operates within carbohydrate metabolism; tricarboxylic acid cycle; succinate from succinyl-CoA (ligase route): step 1/1. In terms of biological role, succinyl-CoA synthetase functions in the citric acid cycle (TCA), coupling the hydrolysis of succinyl-CoA to the synthesis of either ATP or GTP and thus represents the only step of substrate-level phosphorylation in the TCA. The beta subunit provides nucleotide specificity of the enzyme and binds the substrate succinate, while the binding sites for coenzyme A and phosphate are found in the alpha subunit. The chain is Succinate--CoA ligase [ADP-forming] subunit beta from Haemophilus influenzae (strain 86-028NP).